Reading from the N-terminus, the 213-residue chain is ATP-dependent Clp protease proteolytic subunit (213 aa).

The Nucleophile role is filled by Ser-114. His-139 is an active-site residue.

It belongs to the peptidase S14 family. Fourteen ClpP subunits assemble into 2 heptameric rings which stack back to back to give a disk-like structure with a central cavity, resembling the structure of eukaryotic proteasomes.

It localises to the cytoplasm. The enzyme catalyses Hydrolysis of proteins to small peptides in the presence of ATP and magnesium. alpha-casein is the usual test substrate. In the absence of ATP, only oligopeptides shorter than five residues are hydrolyzed (such as succinyl-Leu-Tyr-|-NHMec, and Leu-Tyr-Leu-|-Tyr-Trp, in which cleavage of the -Tyr-|-Leu- and -Tyr-|-Trp bonds also occurs).. Functionally, cleaves peptides in various proteins in a process that requires ATP hydrolysis. Has a chymotrypsin-like activity. Plays a major role in the degradation of misfolded proteins. The sequence is that of ATP-dependent Clp protease proteolytic subunit from Pseudomonas syringae pv. syringae (strain B728a).